We begin with the raw amino-acid sequence, 217 residues long: Small ribosomal subunit protein eS6 (217 aa).

This sequence belongs to the eukaryotic ribosomal protein eS6 family. In terms of processing, phosphorylated.

This is Small ribosomal subunit protein eS6 (RPS6) from Encephalitozoon cuniculi (strain GB-M1) (Microsporidian parasite).